A 765-amino-acid polypeptide reads, in one-letter code: Palmitoyltransferase ZDHHC8 (765 aa).

At 1 to 13 (MPRSPGTRLKPAK) the chain is on the cytoplasmic side. A helical membrane pass occupies residues 14–34 (YIPVATAAALLVGSSTLFFVF). At 35-52 (TCPWLTRAVSPAVPVYNG) the chain is on the lumenal side. The helical transmembrane segment at 53–73 (IIFLFVLANFSMATFMDPGVF) threads the bilayer. Topologically, residues 74 to 148 (PRADEDEDKE…NCIGRRNYRY (75 aa)) are cytoplasmic. In terms of domain architecture, DHHC spans 104-154 (KWCATCHFYRPPRCSHCSVCDNCVEDFDHHCPWVNNCIGRRNYRYFFLFLL). The active-site S-palmitoyl cysteine intermediate is the Cys134. A helical transmembrane segment spans residues 149-169 (FFLFLLSLSAHMVGVVAFGLV). Residues 170–190 (YVLNHAEGLGAAHTTITMAVM) lie on the Lumenal side of the membrane. A helical membrane pass occupies residues 191–211 (CVAGLFFIPVIGLTGFHVVLV). Residues 212 to 765 (TRGRTTNEQV…VGGTTYEISV (554 aa)) lie on the Cytoplasmic side of the membrane. The segment at 293-352 (GLGRSKSKGSLDRLDEKPLDLGPPLPPKIEAGTFSSDLQTPRPGSAESALSVQRTSPPTP) is disordered. Residues 301–311 (GSLDRLDEKPL) are compositionally biased toward basic and acidic residues. Ser337 is modified (phosphoserine). Arg441 bears the Omega-N-methylarginine mark. The segment at 509–540 (LHPGATGDPPRPLPRSFSPVLGPRPREPSPVR) is disordered. 5 positions are modified to phosphoserine: Ser606, Ser627, Ser675, Ser725, and Ser743. A disordered region spans residues 613-746 (GPGFGGARNP…PPGPSASPTR (134 aa)). Positions 622-653 (PALQTSLSSLSSSVSRAPRTSSSSLQADQASS) are enriched in low complexity.

The protein belongs to the DHHC palmitoyltransferase family. ERF2/ZDHHC9 subfamily.

The protein resides in the golgi apparatus membrane. The protein localises to the mitochondrion membrane. The catalysed reaction is L-cysteinyl-[protein] + hexadecanoyl-CoA = S-hexadecanoyl-L-cysteinyl-[protein] + CoA. Functionally, palmitoyltransferase that catalyzes the addition of palmitate onto various protein substrates and therefore functions in several unrelated biological processes. Through the palmitoylation of ABCA1 regulates the localization of the transporter to the plasma membrane and thereby regulates its function in cholesterol and phospholipid efflux. Could also pamitoylate the D(2) dopamine receptor DRD2 and regulate its stability and localization to the plasma membrane. Could also play a role in glutamatergic transmission. This Pan troglodytes (Chimpanzee) protein is Palmitoyltransferase ZDHHC8.